Here is a 159-residue protein sequence, read N- to C-terminus: Ribosome maturation factor RimP (159 aa).

The protein belongs to the RimP family.

It is found in the cytoplasm. In terms of biological role, required for maturation of 30S ribosomal subunits. In Trichlorobacter lovleyi (strain ATCC BAA-1151 / DSM 17278 / SZ) (Geobacter lovleyi), this protein is Ribosome maturation factor RimP.